A 232-amino-acid polypeptide reads, in one-letter code: Enolase-phosphatase E1 (232 aa).

Belongs to the HAD-like hydrolase superfamily. MasA/MtnC family. In terms of assembly, monomer. It depends on Mg(2+) as a cofactor.

It catalyses the reaction 5-methylsulfanyl-2,3-dioxopentyl phosphate + H2O = 1,2-dihydroxy-5-(methylsulfanyl)pent-1-en-3-one + phosphate. Its pathway is amino-acid biosynthesis; L-methionine biosynthesis via salvage pathway; L-methionine from S-methyl-5-thio-alpha-D-ribose 1-phosphate: step 3/6. It participates in amino-acid biosynthesis; L-methionine biosynthesis via salvage pathway; L-methionine from S-methyl-5-thio-alpha-D-ribose 1-phosphate: step 4/6. Bifunctional enzyme that catalyzes the enolization of 2,3-diketo-5-methylthiopentyl-1-phosphate (DK-MTP-1-P) into the intermediate 2-hydroxy-3-keto-5-methylthiopentenyl-1-phosphate (HK-MTPenyl-1-P), which is then dephosphorylated to form the acireductone 1,2-dihydroxy-3-keto-5-methylthiopentene (DHK-MTPene). The protein is Enolase-phosphatase E1 of Xylella fastidiosa (strain M12).